The following is a 117-amino-acid chain: NADH-ubiquinone oxidoreductase chain 3 (117 aa).

Transmembrane regions (helical) follow at residues F4 to L24, L61 to L81, and I86 to I106.

It belongs to the complex I subunit 3 family.

It localises to the mitochondrion membrane. It carries out the reaction a ubiquinone + NADH + 5 H(+)(in) = a ubiquinol + NAD(+) + 4 H(+)(out). In terms of biological role, core subunit of the mitochondrial membrane respiratory chain NADH dehydrogenase (Complex I) that is believed to belong to the minimal assembly required for catalysis. Complex I functions in the transfer of electrons from NADH to the respiratory chain. The immediate electron acceptor for the enzyme is believed to be ubiquinone. In Prototheca wickerhamii, this protein is NADH-ubiquinone oxidoreductase chain 3 (NAD3).